The primary structure comprises 312 residues: Small ribosomal subunit protein RACK1 (312 aa).

7 WD repeats span residues Gly-9 to Lys-42, Gly-63 to Asp-93, Lys-105 to Asn-135, Gly-148 to Asn-180, Gly-192 to Asp-222, Asn-233 to Asp-262, and Pro-279 to Ser-307.

This sequence belongs to the WD repeat G protein beta family. Ribosomal protein RACK1 subfamily.

This is Small ribosomal subunit protein RACK1 from Leishmania major.